The primary structure comprises 1817 residues: Nuclear pore complex protein Nup98-Nup96 (1817 aa).

The segment at 1 to 156 (MFNKSFGTPF…LFGPSSFTAA (156 aa)) is FG repeats 1. The tract at residues 157 to 213 (PTGTTIKFNPPTGTDTMVKAGVSTNISTKHQCITAMKEYESKSLEELRLEDYQANRK) is GLEBS; interaction with RAE1. The tract at residues 214–480 (GPQNQVGAGT…NTTTATLGFG (267 aa)) is FG repeats 2. Positions 512–535 (PFGDSPLFRNPMSDPKKKEERLKP) are disordered. Ser524 is subject to Phosphoserine. A compositionally biased stretch (basic and acidic residues) spans 525-534 (DPKKKEERLK). Residue Lys563 forms a Glycyl lysine isopeptide (Lys-Gly) (interchain with G-Cter in SUMO2) linkage. At Lys603 the chain carries N6-acetyllysine; alternate. Residue Lys603 forms a Glycyl lysine isopeptide (Lys-Gly) (interchain with G-Cter in SUMO2); alternate linkage. Ser608, Ser612, Ser618, Ser623, Ser625, and Ser653 each carry phosphoserine. The disordered stretch occupies residues 614–633 (VNRDSENLASPSEYPENGER). The interval 662-682 (PIAKPIPQTPESAGNKHSNSN) is disordered. A Glycyl lysine isopeptide (Lys-Gly) (interchain with G-Cter in SUMO2) cross-link involves residue Lys665. Residue Thr670 is modified to Phosphothreonine. The segment covering 670 to 682 (TPESAGNKHSNSN) has biased composition (polar residues). Phosphoserine is present on residues Ser673, Ser681, Ser683, and Ser839. The Peptidase S59 domain maps to 738–880 (KVGYYTIPSM…GSWVFKVSHF (143 aa)). The active-site Nucleophile is the Ser881. Positions 886 to 937 (QDSDEEEEEHPSKTSTKKLKTAPLPPASQTTPLQMALNGKPAPPPQSQSPEV) are disordered. Phosphoserine occurs at positions 888, 897, and 934. Phosphothreonine is present on Thr1000. A phosphoserine mark is found at Ser1023, Ser1028, Ser1043, Ser1060, and Ser1064. Thr1070 is subject to Phosphothreonine. A Phosphoserine modification is found at Ser1329. Position 1772 is a phosphothreonine (Thr1772).

This sequence belongs to the nucleoporin GLFG family. In terms of assembly, part of the nuclear pore complex (NPC). Interacts directly with NUP96. Part of the Nup160 subcomplex in the nuclear pore which is composed of NUP160, NUP133, NUP107 and NUP96; this complex plays a role in RNA export and in tethering NUP98 and NUP153 to the nucleus. Interacts with RAE1. Does not interact with TPR. Interacts with NUP88. Interacts directly with NUP88 and NUP214, subunits of the cytoplasmic filaments of the NPC. Interacts (via N-terminus) with DHX9 (via DRBM, OB-fold and RGG domains); this interaction occurs in a RNA-dependent manner and stimulates DHX9-mediated ATPase activity. (Microbial infection) Interacts with HIV-1 capsid protein P24 and nucleocapsid protein P7 (in vitro); the interaction may promote the integration of the virus in the host nucleus (in vitro). As to quaternary structure, (Microbial infection) Interacts with vesicular stomatitis virus protein M. In terms of assembly, (Microbial infection) Interacts with SARS coronavirus-2/SARS-CoV-2 ORF6 protein; the interaction blocks STAT1 nuclear translocation, antagonizes interferon signaling and blocks mRNA nuclear export (ex vivo). (Microbial infection) Interacts with SARS coronavirus/SARS-CoV ORF6 protein. Post-translationally, isoform 1 to isoform 4 are autoproteolytically cleaved to yield Nup98 and Nup96 or Nup98 only, respectively. Cleaved Nup98 is necessary for the targeting of Nup98 to the nuclear pore and the interaction with Nup96. In terms of processing, proteolytically degraded after poliovirus (PV) infection; degradation is partial and NCP- and TPR-binding domains withstand degradation.

The protein resides in the nucleus membrane. Its subcellular location is the nucleus. It localises to the nuclear pore complex. It is found in the nucleoplasm. In terms of biological role, plays a role in the nuclear pore complex (NPC) assembly and/or maintenance. NUP98 and NUP96 are involved in the bidirectional transport across the NPC. May anchor NUP153 and TPR to the NPC. In cooperation with DHX9, plays a role in transcription and alternative splicing activation of a subset of genes. Involved in the localization of DHX9 in discrete intranuclear foci (GLFG-body). (Microbial infection) Interacts with HIV-1 capsid protein P24 and nucleocapsid protein P7 and may thereby promote the integration of the virus in the host nucleus (in vitro). Binding affinity to HIV-1 CA-NC complexes bearing the capsid change Asn-74-Asp is reduced (in vitro). This Homo sapiens (Human) protein is Nuclear pore complex protein Nup98-Nup96.